A 388-amino-acid polypeptide reads, in one-letter code: Succinate--CoA ligase [ADP-forming] subunit beta (388 aa).

An ATP-grasp domain is found at 9–244 (KQLFAEYGLP…PSQEDEREAH (236 aa)). ATP contacts are provided by residues K46, 53–55 (GRG), E99, T102, and E107. N199 and D213 together coordinate Mg(2+). Substrate-binding positions include N264 and 321 to 323 (GIV).

This sequence belongs to the succinate/malate CoA ligase beta subunit family. Heterotetramer of two alpha and two beta subunits. Requires Mg(2+) as cofactor.

It catalyses the reaction succinate + ATP + CoA = succinyl-CoA + ADP + phosphate. The catalysed reaction is GTP + succinate + CoA = succinyl-CoA + GDP + phosphate. The protein operates within carbohydrate metabolism; tricarboxylic acid cycle; succinate from succinyl-CoA (ligase route): step 1/1. Its function is as follows. Succinyl-CoA synthetase functions in the citric acid cycle (TCA), coupling the hydrolysis of succinyl-CoA to the synthesis of either ATP or GTP and thus represents the only step of substrate-level phosphorylation in the TCA. The beta subunit provides nucleotide specificity of the enzyme and binds the substrate succinate, while the binding sites for coenzyme A and phosphate are found in the alpha subunit. The sequence is that of Succinate--CoA ligase [ADP-forming] subunit beta from Colwellia psychrerythraea (strain 34H / ATCC BAA-681) (Vibrio psychroerythus).